The primary structure comprises 90 residues: Probable Fe(2+)-trafficking protein (90 aa).

The protein belongs to the Fe(2+)-trafficking protein family.

In terms of biological role, could be a mediator in iron transactions between iron acquisition and iron-requiring processes, such as synthesis and/or repair of Fe-S clusters in biosynthetic enzymes. This chain is Probable Fe(2+)-trafficking protein, found in Paraburkholderia xenovorans (strain LB400).